The primary structure comprises 255 residues: Hydroxyacylglutathione hydrolase (255 aa).

Residues histidine 55, histidine 57, aspartate 59, histidine 60, histidine 113, aspartate 132, and histidine 170 each coordinate Zn(2+).

Belongs to the metallo-beta-lactamase superfamily. Glyoxalase II family. In terms of assembly, monomer. The cofactor is Zn(2+).

It carries out the reaction an S-(2-hydroxyacyl)glutathione + H2O = a 2-hydroxy carboxylate + glutathione + H(+). Its pathway is secondary metabolite metabolism; methylglyoxal degradation; (R)-lactate from methylglyoxal: step 2/2. Thiolesterase that catalyzes the hydrolysis of S-D-lactoyl-glutathione to form glutathione and D-lactic acid. This chain is Hydroxyacylglutathione hydrolase, found in Methylobacterium sp. (strain 4-46).